The following is a 430-amino-acid chain: Transcription factor iws-1 (430 aa).

The span at 1–14 shows a compositional bias: low complexity; it reads MSDAASPAGSPAAE. The segment at 1–153 is disordered; that stretch reads MSDAASPAGS…EENLTPDERR (153 aa). The span at 15-33 shows a compositional bias: basic and acidic residues; that stretch reads PTEHRDEDQVNETHQDDGS. The span at 52 to 63 shows a compositional bias: acidic residues; the sequence is VLSEIDENEFGD. Over residues 95–104 the composition is skewed to basic residues; the sequence is KEGRRPKKRS. The segment covering 124–137 has biased composition (basic and acidic residues); sequence VRAEGERRARKEVE. Residues 244–321 enclose the TFIIS N-terminal domain; that stretch reads QSVRYFLEPL…GEWSRLILKR (78 aa). Residues 402–430 are disordered; that stretch reads GQAPTDHRPIGHSGHEAFRRMTQKGKGKR. The span at 406–420 shows a compositional bias: basic and acidic residues; that stretch reads TDHRPIGHSGHEAFR.

This sequence belongs to the IWS1 family.

The protein localises to the nucleus. Functionally, transcription factor involved in RNA polymerase II transcription regulation. May function in both SPT15/TBP post-recruitment and recruitment steps of transcription. The polypeptide is Transcription factor iws-1 (iws-1) (Neurospora crassa (strain ATCC 24698 / 74-OR23-1A / CBS 708.71 / DSM 1257 / FGSC 987)).